The primary structure comprises 552 residues: DNA ligase (552 aa).

Glu229 is a binding site for ATP. The N6-AMP-lysine intermediate role is filled by Lys231. The ATP site is built by Arg236 and Glu283. Positions 283 and 377 each coordinate Mg(2+). ATP-binding residues include Lys382 and Lys397.

The protein belongs to the ATP-dependent DNA ligase family. As to quaternary structure, interacts with host TOP2A and TOP2B. Mg(2+) is required as a cofactor.

It localises to the host cytoplasm. The enzyme catalyses ATP + (deoxyribonucleotide)n-3'-hydroxyl + 5'-phospho-(deoxyribonucleotide)m = (deoxyribonucleotide)n+m + AMP + diphosphate.. Functionally, DNA ligase that seals nicks in double-stranded DNA during DNA replication, DNA recombination and DNA repair. Recruits cellular topoisomerase II to sites of viral replication and assembly. The polypeptide is DNA ligase (OPG180) (Homo sapiens (Human)).